Reading from the N-terminus, the 65-residue chain is Large ribosomal subunit protein bL35 (65 aa).

The protein belongs to the bacterial ribosomal protein bL35 family.

The polypeptide is Large ribosomal subunit protein bL35 (Borrelia turicatae (strain 91E135)).